Consider the following 411-residue polypeptide: Keratin, type I cytoskeletal 12 (411 aa).

Residues 1-42 (DHDYEFPGIQAFAGLGMGFGGSPGGGSLYLPSGNDGGLLSGS) form a head region. The tract at residues 43–78 (EKETMQNLNDRLASYLDKVRALEDANAELENKIREW) is coil 1A. The IF rod domain maps to 43–359 (EKETMQNLND…RLLDGEAQGD (317 aa)). Residues 83-101 (GHGHGDCGPQHDYSKYHPL) form a linker 1 region. The tract at residues 102–193 (IEDLRNKIIS…KNHEEELQSC (92 aa)) is coil 1B. The segment at 194–216 (RAGGPGEVSVEMDAAPGVDLTRL) is linker 12. The interval 217-354 (LNDMRAQYEA…IETYRRLLDG (138 aa)) is coil 2. The tract at residues 355–411 (EAQGDGLDESSAMTGSRSQAQSIDSSKDPSKTRKIKTIVQEVVNGEVVSSQVQEIQN) is tail. A disordered region spans residues 356-387 (AQGDGLDESSAMTGSRSQAQSIDSSKDPSKTR). Residues 365–378 (SAMTGSRSQAQSID) are compositionally biased toward polar residues.

The protein belongs to the intermediate filament family. Heterotetramer of two type I and two type II keratins. Keratin-3 associates with keratin-12. In terms of tissue distribution, cornea specific. Associated mainly with all layers of the central corneal epithelium and also found in the suprabasal limbal epithelium.

Functionally, involved in corneal epithelium organization, integrity and corneal keratin expression. This Oryctolagus cuniculus (Rabbit) protein is Keratin, type I cytoskeletal 12 (KRT12).